We begin with the raw amino-acid sequence, 320 residues long: o-succinylbenzoate synthase (320 aa).

The active-site Proton donor is the Lys-133. Residues Asp-161, Glu-190, and Asp-213 each coordinate Mg(2+). Lys-235 (proton acceptor) is an active-site residue.

Belongs to the mandelate racemase/muconate lactonizing enzyme family. MenC type 1 subfamily. Requires a divalent metal cation as cofactor.

It carries out the reaction (1R,6R)-6-hydroxy-2-succinyl-cyclohexa-2,4-diene-1-carboxylate = 2-succinylbenzoate + H2O. It functions in the pathway quinol/quinone metabolism; 1,4-dihydroxy-2-naphthoate biosynthesis; 1,4-dihydroxy-2-naphthoate from chorismate: step 4/7. It participates in quinol/quinone metabolism; menaquinone biosynthesis. Converts 2-succinyl-6-hydroxy-2,4-cyclohexadiene-1-carboxylate (SHCHC) to 2-succinylbenzoate (OSB). This chain is o-succinylbenzoate synthase, found in Escherichia coli O127:H6 (strain E2348/69 / EPEC).